Consider the following 254-residue polypeptide: Mitochondrial cardiolipin hydrolase (254 aa).

The Mitochondrial intermembrane segment spans residues 1–9 (MERFRWQVA). Positions 1-43 (MERFRWQVAAVAAVGLALALEALPSVLCWLRAGRRQQQRPPRR) are required for mitochondrial localization. A helical membrane pass occupies residues 10–32 (AVAAVGLALALEALPSVLCWLRA). The Cytoplasmic segment spans residues 33–254 (GRRQQQRPPR…SKCSHHLSQV (222 aa)). The segment at 49–82 (PSQVTCTEALLQAPGEAPSGPPAGCRCSLPHGES) adopts a C3H1-type; atypical zinc-finger fold. The region spanning 155-182 (DLGYMHHKFAIVDKKVLITGSLNWTTQA) is the PLD phosphodiesterase domain. Residues His160, Lys162, and Asp167 contribute to the active site.

It belongs to the phospholipase D family. MitoPLD/Zucchini subfamily. In terms of assembly, homodimer. Interacts with MOV10L1. Interacts with MIGA1 and MIGA2; possibly facilitating homodimer formation. Interacts with GK2.

The protein localises to the mitochondrion outer membrane. The protein resides in the nucleus membrane. Its subcellular location is the cell membrane. It is found in the golgi apparatus. It catalyses the reaction a cardiolipin + H2O = a 1,2-diacyl-sn-glycero-3-phospho-(1'-sn-glycerol) + a 1,2-diacyl-sn-glycero-3-phosphate + H(+). Its activity is regulated as follows. Single stranded DNA (ssDNA) hydrolase activity does not depend upon, but is stimulated by the presence of Ca(2+) and Mn(2+). MIGA1 and MIGA2 increase PLD6 self-association affinity and affects the homodimer conformation facilitating its phospholipase activity over the nuclease activity. MYC induces its expression and stimulates its phospholipase activity. Its function is as follows. Presents phospholipase and nuclease activities, depending on the different physiological conditions. Interaction with Mitoguardin (MIGA1 or MIGA2) affects the dimer conformation, facilitating the lipase activity over the nuclease activity. Plays a key role in mitochondrial fusion and fission via its phospholipase activity. In its phospholipase role, it uses the mitochondrial lipid cardiolipin as substrate to generate phosphatidate (PA or 1,2-diacyl-sn-glycero-3-phosphate), a second messenger signaling lipid. Production of PA facilitates Mitofusin-mediated fusion, whereas the cleavage of PA by the Lipin family of phosphatases produces diacylgycerol (DAG) which promotes mitochondrial fission. Both Lipin and DAG regulate mitochondrial dynamics and membrane fusion/fission, important processes for adapting mitochondrial metabolism to changes in cell physiology. Mitochondrial fusion enables cells to cope with the increased nucleotide demand during DNA synthesis. Mitochondrial function and dynamics are closely associated with biological processes such as cell growth, proliferation, and differentiation. Mediator of MYC activity, promotes mitochondrial fusion and activates AMPK which in turn inhibits YAP/TAZ, thereby inducing cell growth and proliferation. The endonuclease activity plays a critical role in PIWI-interacting RNA (piRNA) biogenesis during spermatogenesis. Implicated in spermatogenesis and sperm fertility in testicular germ cells, its single strand-specific nuclease activity is critical for the biogenesis/maturation of PIWI-interacting RNA (piRNA). MOV10L1 selectively binds to piRNA precursors and funnels them to the endonuclease that catalyzes the first cleavage step of piRNA processing to generate piRNA intermediate fragments that are subsequently loaded to Piwi proteins. Cleaves either DNA or RNA substrates with similar affinity, producing a 5' phosphate end, in this way it participates in the processing of primary piRNA transcripts. piRNAs provide essential protection against the activity of mobile genetic elements. piRNA-mediated transposon silencing is thus critical for maintaining genome stability, in particular in germline cells when transposons are mobilized as a consequence of wide-spread genomic demethylation. PA may act as signaling molecule in the recognition/transport of the precursor RNAs of primary piRNAs. Interacts with tesmin in testes, suggesting a role in spermatogenesis via association with its interacting partner. The sequence is that of Mitochondrial cardiolipin hydrolase (PLD6) from Canis lupus familiaris (Dog).